The chain runs to 79 residues: Sulfur carrier protein TusA (79 aa).

Residue cysteine 17 is the Cysteine persulfide intermediate of the active site.

This sequence belongs to the sulfur carrier protein TusA family.

It is found in the cytoplasm. Its function is as follows. Sulfur carrier protein which probably makes part of a sulfur-relay system. This is Sulfur carrier protein TusA from Actinobacillus succinogenes (strain ATCC 55618 / DSM 22257 / CCUG 43843 / 130Z).